The sequence spans 135 residues: Small ribosomal subunit protein bS6 (135 aa).

The tract at residues 96–135 (HAEGPSIQMQKRDERERGDRGDRSDRGDRGDRGDRGGFRR) is disordered. Positions 105 to 135 (QKRDERERGDRGDRSDRGDRGDRGDRGGFRR) are enriched in basic and acidic residues.

Belongs to the bacterial ribosomal protein bS6 family.

Functionally, binds together with bS18 to 16S ribosomal RNA. This chain is Small ribosomal subunit protein bS6, found in Cereibacter sphaeroides (strain ATCC 17029 / ATH 2.4.9) (Rhodobacter sphaeroides).